A 727-amino-acid polypeptide reads, in one-letter code: MDDTQHFCLRWNNYQSSITSAFENLRDDEAFVDVTLACEGRSIKAHRVVLSACSPYFRELLKSTPCKHPVILLQDVNFMDLHALVEFIYHGEVNVHQKSLQSFLKTAEVLRVSGLTQQQAEDTHSHLAQIQNLANSGGRTPLNTHTQSLPHPHHGSLHDDGGSSTLFSRQGAGSPPPTAVPSLPSHINNQLLKRMAMMHRSSAAAAAEETSHAFKRLRGSDNSLPLSGAVGSGSNNNSPDLPPLHARSASPQQTPADFSTIKHHNNNNTPPLKEEKRNGPTGNGNSGNGNGNGNGASNGNGISISDKLGSLTPSPLARAGADDVKSEPMDMVCSNNNANANDEHSNDSTGEHDANRSSSGDGGKGSLSSGNDEEIGDGLASHHAAPQFIMSPAENKMFHAAAFNFPNIDPSALLGLNTQLQQSGDLAVSPQGKLTTNATTTTTTINNSITNNNNNNNNNNYDYSLPTKNSNSQKTPSPTTTTLTTPTTTTPTRPTAITSASGICGLNLSTFAANGSSSGGSNGGLSMTALLPQQQQQQQQQHQMSQQQQQQQQQQQQQGNSSSGQQQQPNGILACSTPKANTPTTTQQQMYAAVMAAAASASASTSGSANSSLNNSNSTLNTSGGLNNSASGGDDFRCNPCNKNLSSLTRLKRHIQNVHMRPTKEPVCNICKRVYSSLNSLRNHKSIYHRNLKQPKQEPGVGATQAAANSFYHQQHQQQQLNHHSSS.

One can recognise a BTB domain in the interval 32–97; the sequence is VDVTLACEGR…IYHGEVNVHQ (66 aa). Positions 135–149 are enriched in polar residues; the sequence is NSGGRTPLNTHTQSL. 5 disordered regions span residues 135–185, 218–378, 445–496, 532–583, and 604–626; these read NSGG…SLPS, RGSD…IGDG, INNS…RPTA, PQQQ…ANTP, and STSGSANSSLNNSNSTLNTSGGL. The segment covering 227 to 238 has biased composition (low complexity); it reads SGAVGSGSNNNS. Gly residues predominate over residues 281–298; it reads TGNGNSGNGNGNGNGASN. Positions 341–355 are enriched in basic and acidic residues; the sequence is NDEHSNDSTGEHDAN. 3 stretches are compositionally biased toward low complexity: residues 445–460, 475–495, and 533–568; these read INNSITNNNNNNNNNN, TPSPTTTTLTTPTTTTPTRPT, and QQQQQQQQQHQMSQQQQQQQQQQQQQGNSSSGQQQQ. 2 consecutive C2H2-type zinc fingers follow at residues 636-659 and 666-689; these read FRCNPCNKNLSSLTRLKRHIQNVH and PVCNICKRVYSSLNSLRNHKSIYH. Positions 694 to 727 are disordered; that stretch reads QPKQEPGVGATQAAANSFYHQQHQQQQLNHHSSS. Over residues 713-727 the composition is skewed to low complexity; sequence HQQHQQQQLNHHSSS.

It localises to the nucleus. In terms of biological role, broad-complex proteins are required for puffing and transcription of salivary gland late genes during metamorphosis. The polypeptide is Broad-complex core protein isoforms 1/2/3/4/5 (br) (Drosophila melanogaster (Fruit fly)).